Reading from the N-terminus, the 184-residue chain is MDKFLIDVTVEIPKSSKIKYEYDRKTSQIRVDRILFGSESYPQNYGFIANTLDWDGDELDCFIFADQAFLPGVVVPTRIVGALEMVDDGELDTKLLGVIDCDPRYKEINSVNDLPKHRVDEIIGFLKTYKLLQKKEVIIKGVQSLEWAKKEYQVCVDLMKQYGKLPKDEFIAKMQKLHPEHYQK.

K19, R33, and Y45 together coordinate substrate. 3 residues coordinate Mg(2+): D55, D60, and D92. Position 129 (Y129) interacts with substrate.

Belongs to the PPase family. Homohexamer. It depends on Mg(2+) as a cofactor.

The protein resides in the cytoplasm. It catalyses the reaction diphosphate + H2O = 2 phosphate + H(+). In terms of biological role, catalyzes the hydrolysis of inorganic pyrophosphate (PPi) forming two phosphate ions. In Mycoplasma pneumoniae (strain ATCC 29342 / M129 / Subtype 1) (Mycoplasmoides pneumoniae), this protein is Inorganic pyrophosphatase.